A 463-amino-acid polypeptide reads, in one-letter code: Asparagine--tRNA ligase (463 aa).

This sequence belongs to the class-II aminoacyl-tRNA synthetase family. In terms of assembly, homodimer.

It is found in the cytoplasm. The enzyme catalyses tRNA(Asn) + L-asparagine + ATP = L-asparaginyl-tRNA(Asn) + AMP + diphosphate + H(+). The polypeptide is Asparagine--tRNA ligase (Clostridium botulinum (strain ATCC 19397 / Type A)).